The following is a 337-amino-acid chain: Fructose-1,6-bisphosphatase class 1 (337 aa).

Glu90, Asp112, Leu114, and Asp115 together coordinate Mg(2+). Substrate contacts are provided by residues 115 to 118, Asn211, and Lys277; that span reads DGSS. Glu283 contacts Mg(2+).

This sequence belongs to the FBPase class 1 family. As to quaternary structure, homotetramer. The cofactor is Mg(2+).

The protein localises to the cytoplasm. It carries out the reaction beta-D-fructose 1,6-bisphosphate + H2O = beta-D-fructose 6-phosphate + phosphate. It participates in carbohydrate biosynthesis; gluconeogenesis. The polypeptide is Fructose-1,6-bisphosphatase class 1 (Azotobacter vinelandii (strain DJ / ATCC BAA-1303)).